The primary structure comprises 335 residues: Taste receptor type 2 member 119 (335 aa).

Topologically, residues 1-7 (MMEGHML) are extracellular. A helical transmembrane segment spans residues 8–28 (FFLLVVVVQFLTGVLANGLIV). The Cytoplasmic portion of the chain corresponds to 29–43 (VVNAIDLIMWKKMAP). Residues 44-64 (LDLLLFCLATSRIILQLCILF) traverse the membrane as a helical segment. Residues 65–81 (AQLGLSCLVRHTLFADN) lie on the Extracellular side of the membrane. N81 is a glycosylation site (N-linked (GlcNAc...) asparagine). A helical membrane pass occupies residues 82 to 102 (VTFVYIINELSLWFATWLGVF). Residues 103 to 124 (YCAKIATIPHPLFLWLKMRISR) lie on the Cytoplasmic side of the membrane. A helical membrane pass occupies residues 125 to 145 (LVPWLILASVVYVTVTTFIHS). The Extracellular segment spans residues 146–176 (RETSELPKQIFISFFSKNTTRVRPAHATLLS). An N-linked (GlcNAc...) asparagine glycan is attached at N163. The chain crosses the membrane as a helical span at residues 177-197 (VFVFGLTLPFLIFTVAVLLLL). The Cytoplasmic portion of the chain corresponds to 198–224 (SSLWNHSRQMRTMVGTREPSRHALVSA). Residues 225-245 (MLSILSFLILYLSHDMVAVLI) traverse the membrane as a helical segment. Over 246 to 256 (CTQGLHFGSRT) the chain is Extracellular. Residues 257–277 (FAFCLLVIGMYPSLHSIVLIL) form a helical membrane-spanning segment. The Cytoplasmic segment spans residues 278-335 (GNPKLKRNAKTFIVHCKCCHCARAWVTSRNPRLSDLPVPATHHSANKTSCSEACIMPS).

Belongs to the G-protein coupled receptor T2R family. As to expression, expressed in subsets of taste receptor cells of the tongue and palate epithelium and exclusively in gustducin-positive cells. Expressed in 15% taste bud cells in circumvallate and foliate papillae but only in 2% in fungiform papillae. Expressed in the gastro and duodenal tissue. Not expressed in colon, liver, heart and kidney.

The protein localises to the membrane. Its function is as follows. Gustducin-coupled receptor implicated in the perception of bitter compounds in the oral cavity and the gastrointestinal tract. Signals through PLCB2 and the calcium-regulated cation channel TRPM5. The protein is Taste receptor type 2 member 119 (Tas2r119) of Mus musculus (Mouse).